The primary structure comprises 437 residues: Glutamate-1-semialdehyde 2,1-aminomutase (437 aa).

The residue at position 272 (Lys272) is an N6-(pyridoxal phosphate)lysine.

It belongs to the class-III pyridoxal-phosphate-dependent aminotransferase family. HemL subfamily. Homodimer. It depends on pyridoxal 5'-phosphate as a cofactor.

The protein localises to the cytoplasm. The enzyme catalyses (S)-4-amino-5-oxopentanoate = 5-aminolevulinate. The protein operates within porphyrin-containing compound metabolism; protoporphyrin-IX biosynthesis; 5-aminolevulinate from L-glutamyl-tRNA(Glu): step 2/2. In Moorella thermoacetica (strain ATCC 39073 / JCM 9320), this protein is Glutamate-1-semialdehyde 2,1-aminomutase.